The sequence spans 556 residues: Insulin-like growth factor 2 mRNA-binding protein 2 (556 aa).

2 consecutive RRM domains span residues 3-76 and 82-157; these read NKLY…YSVS and RKIQ…YIPD. Serine 11 bears the Phosphoserine mark. The tract at residues 156–188 is disordered; that stretch reads PDEEVSSPSPPQRAQRGDHSSREQGHAPGGTSQ. Residues serine 162 and serine 164 each carry the phosphoserine modification. Over residues 170–180 the composition is skewed to basic and acidic residues; it reads QRGDHSSREQG. 4 KH domains span residues 193–258, 274–341, 384–449, and 466–532; these read DFPL…CRMI, EIPL…EIEI, QEIV…QGRI, and KLEA…QRKI. Threonine 507 is modified (phosphothreonine).

It belongs to the RRM IMP/VICKZ family. In terms of assembly, can form homooligomers and heterooligomers with IGF2BP1 and IGF2BP3 in an RNA-dependent manner. Interacts with HNRPD. Interacts with IGF2BP1. Interacts with ELAVL1, DHX9, HNRNPU, MATR3 and PABPC1.

The protein localises to the nucleus. It is found in the cytoplasm. Its subcellular location is the P-body. It localises to the stress granule. RNA-binding factor that recruits target transcripts to cytoplasmic protein-RNA complexes (mRNPs). This transcript 'caging' into mRNPs allows mRNA transport and transient storage. It also modulates the rate and location at which target transcripts encounter the translational apparatus and shields them from endonuclease attacks or microRNA-mediated degradation. Preferentially binds to N6-methyladenosine (m6A)-containing mRNAs and increases their stability. Binds to the 5'-UTR of the insulin-like growth factor 2 (IGF2) mRNAs. Binding is isoform-specific. Binds to beta-actin/ACTB and MYC transcripts. Increases MYC mRNA stability by binding to the coding region instability determinant (CRD) and binding is enhanced by m6A-modification of the CRD. This Pongo abelii (Sumatran orangutan) protein is Insulin-like growth factor 2 mRNA-binding protein 2 (IGF2BP2).